A 403-amino-acid chain; its full sequence is S-adenosylmethionine synthase (403 aa).

Position 15 (histidine 15) interacts with ATP. Mg(2+) is bound at residue aspartate 17. Residue glutamate 43 participates in K(+) binding. Positions 56 and 99 each coordinate L-methionine. The segment at 99-109 is flexible loop; sequence QSPDINQGVDR. Residues 166 to 168, 232 to 233, aspartate 241, 247 to 248, alanine 264, and lysine 268 contribute to the ATP site; these read DAK, KF, and RK. Aspartate 241 serves as a coordination point for L-methionine. Lysine 272 contributes to the L-methionine binding site.

This sequence belongs to the AdoMet synthase family. In terms of assembly, homotetramer; dimer of dimers. It depends on Mg(2+) as a cofactor. K(+) serves as cofactor.

The protein localises to the cytoplasm. It carries out the reaction L-methionine + ATP + H2O = S-adenosyl-L-methionine + phosphate + diphosphate. The protein operates within amino-acid biosynthesis; S-adenosyl-L-methionine biosynthesis; S-adenosyl-L-methionine from L-methionine: step 1/1. Catalyzes the formation of S-adenosylmethionine (AdoMet) from methionine and ATP. The overall synthetic reaction is composed of two sequential steps, AdoMet formation and the subsequent tripolyphosphate hydrolysis which occurs prior to release of AdoMet from the enzyme. The protein is S-adenosylmethionine synthase of Xanthomonas campestris pv. campestris (strain ATCC 33913 / DSM 3586 / NCPPB 528 / LMG 568 / P 25).